Reading from the N-terminus, the 460-residue chain is MNPVKNQVPKVGFVSLGCPKALVDSERILTQLRVEGYDIVPSYDAADVVVVNTCGFIDSAVTESLDAIGEAMNANGKVIVTGCLGKRPEQIREAYPQVLAVSGPQDYQSVMEAVHAALPPRHDPFVDLVPDYGIKLTPRHYAYLKISEGCNHRCSFCIIPSMRGDLVSRPVDEVLCEAERLVRGGVKELLVVSQDTSAYGVDLKYAERPWRDRMYQTRMKALCEGLSELGVWTRLHYVYPYPHVDDVLPLMAEGKLLPYLDIPFQHASPRILKLMKRPGAVEKTLQRVQRWKAMCPEITVRSTFIVGFPGETDAEFESLLDFLDQAQLDRVGAFAYSPVDGASANALPDPVPEEVKQERLARFMAKQAEISALRLEAKIGSVQQCLVDLIEDDIAVARSRADAPEIDGLVHIQNGGELGLKVGDLVDVEITDSDEHDLFGDALPANVVPQQGRALNLQMV.

The MTTase N-terminal domain maps to 9-119 (PKVGFVSLGC…VMEAVHAALP (111 aa)). [4Fe-4S] cluster is bound by residues Cys18, Cys54, Cys83, Cys150, Cys154, and Cys157. Residues 136–374 (LTPRHYAYLK…AKQAEISALR (239 aa)) enclose the Radical SAM core domain. Residues 376-444 (EAKIGSVQQC…EHDLFGDALP (69 aa)) enclose the TRAM domain.

It belongs to the methylthiotransferase family. RimO subfamily. [4Fe-4S] cluster serves as cofactor.

It localises to the cytoplasm. The catalysed reaction is L-aspartate(89)-[ribosomal protein uS12]-hydrogen + (sulfur carrier)-SH + AH2 + 2 S-adenosyl-L-methionine = 3-methylsulfanyl-L-aspartate(89)-[ribosomal protein uS12]-hydrogen + (sulfur carrier)-H + 5'-deoxyadenosine + L-methionine + A + S-adenosyl-L-homocysteine + 2 H(+). Functionally, catalyzes the methylthiolation of an aspartic acid residue of ribosomal protein uS12. The protein is Ribosomal protein uS12 methylthiotransferase RimO of Xanthomonas oryzae pv. oryzae (strain PXO99A).